The sequence spans 887 residues: Exosome complex component 10 (887 aa).

Positions 1-10 (MAPPSPREHQ) are enriched in basic and acidic residues. The tract at residues 1–23 (MAPPSPREHQSAPATSATKPDAE) is disordered. K19 is covalently cross-linked (Glycyl lysine isopeptide (Lys-Gly) (interchain with G-Cter in SUMO2)). Residues 289–455 (HLVSSLDELV…YIYDRMRLEL (167 aa)) enclose the 3'-5' exonuclease domain. Mg(2+)-binding residues include D313, E315, D371, and D440. The HRDC domain maps to 503–583 (NSQQLTAFQL…QQAREMPLLK (81 aa)). K583 participates in a covalent cross-link: Glycyl lysine isopeptide (Lys-Gly) (interchain with G-Cter in SUMO1); alternate. K583 is covalently cross-linked (Glycyl lysine isopeptide (Lys-Gly) (interchain with G-Cter in SUMO2); alternate). A Glycyl lysine isopeptide (Lys-Gly) (interchain with G-Cter in SUMO2) cross-link involves residue K710. Disordered stretches follow at residues 734 to 757 (KEPKEATKKKVAEQTAAREEAKEE) and 777 to 887 (NATK…WPKR). Residues 778–796 (ATKKRERATSDLRTIEQKQ) are compositionally biased toward basic and acidic residues. At S823 the chain carries Phosphoserine. Glycyl lysine isopeptide (Lys-Gly) (interchain with G-Cter in SUMO2) cross-links involve residues K835, K861, and K875.

It belongs to the exosome component 10/RRP6 family. In terms of assembly, component of the RNA exosome complex. The catalytically inactive RNA exosome core complex (Exo-9) associates with the catalytic subunit EXOSC10/RRP6 (via its N-terminus). Exo-9 may associate with DIS3 to form the nucleolar exosome complex, or DIS3L to form the cytoplasmic exosome complex. The RNA exosome complex interacts with cofactors C1D/RRP47, MPHOSPH6/MPP6 and MTREX/MTR4. Interacts with MTREX; the interaction with MTREX mediates the association of MTREX with nuclear RNA exosomes. Part of the small subunit (SSU) processome, composed of more than 70 proteins and the RNA chaperone small nucleolar RNA (snoRNA) U3. Interacts with ALYREF/THOC4. Interacts with DHX36; this interaction occurs in a RNase-insensitive manner. Interacts with NRDE2. Interacts (via C-terminus) with USP36 (via C-terminus); the interaction is facilitated by the association with RNA and promotes sumoylation of EXOSC10. The cofactor is Mg(2+). In terms of processing, sumoylated by USP36; sumoylation does not significantly affect EXOSC10 nucleolar localization and association with core exosome and USP36, but regulates the nucleolar RNA exosome activity in rRNA processing by promoting binding of EXOSC10 to pre-rRNAs. Effects of sumoylation on EXOSC10 levels vary between different studies. Sumoylation of EXOSC10 is required for the modulation of EXOSC10 effects on cellular protein translation and cell proliferation. Sumoylation is promoted by mild hypothermia. Expressed in ovary (at protein level). Expressed in testis (at protein level). Expressed in lung (at protein level).

Its subcellular location is the cytoplasm. The protein localises to the nucleus. The protein resides in the nucleolus. It localises to the nucleoplasm. In terms of biological role, catalytic component of the RNA exosome complex which has 3'-&gt;5' exoribonuclease activity and participates in a multitude of cellular RNA processing and degradation events. In the nucleus, the RNA exosome complex is involved in proper maturation of stable RNA species such as rRNA, snRNA and snoRNA, in the elimination of RNA processing by-products and non-coding 'pervasive' transcripts, such as antisense RNA species and promoter-upstream transcripts (PROMPTs), and of mRNAs with processing defects, thereby limiting or excluding their export to the cytoplasm. Part of the small subunit (SSU) processome, first precursor of the small eukaryotic ribosomal subunit. During the assembly of the SSU processome in the nucleolus, many ribosome biogenesis factors, an RNA chaperone and ribosomal proteins associate with the nascent pre-rRNA and work in concert to generate RNA folding, modifications, rearrangements and cleavage as well as targeted degradation of pre-ribosomal RNA by the RNA exosome. The RNA exosome may be involved in Ig class switch recombination (CSR) and/or Ig variable region somatic hypermutation (SHM) by targeting AICDA deamination activity to transcribed dsDNA substrates. In the cytoplasm, the RNA exosome complex is involved in general mRNA turnover and specifically degrades inherently unstable mRNAs containing AU-rich elements (AREs) within their 3' untranslated regions, and in RNA surveillance pathways, preventing translation of aberrant mRNAs. It seems to be involved in degradation of histone mRNA. EXOSC10 is required for nucleolar localization of C1D and probably mediates the association of MTREX, C1D and MPHOSPH6 with the RNA exosome involved in the maturation of 5.8S rRNA. Plays a role in the recruitment of replication protein A complex (RPA) and RAD51 to DNA double-strand breaks caused by irradiation, contributing to DNA repair by homologous recombination. Regulates levels of damage-induced RNAs in order to prevent DNA-RNA hybrid formation at DNA double-strand breaks and limit DNA end resection after damage. Plays a role in oocyte development, maturation and survival. Required for normal testis development and mitotic division of spermatogonia. Plays a role in proper embryo development. Required for global protein translation. Required for cell proliferation. The sequence is that of Exosome complex component 10 (Exosc10) from Mus musculus (Mouse).